The chain runs to 436 residues: 3-ketoacyl-CoA thiolase (436 aa).

Catalysis depends on Cys-99, which acts as the Acyl-thioester intermediate. Active-site proton acceptor residues include His-392 and Cys-422.

It belongs to the thiolase-like superfamily. Thiolase family. Heterotetramer of two alpha chains (FadJ) and two beta chains (FadI).

The protein localises to the cytoplasm. The enzyme catalyses an acyl-CoA + acetyl-CoA = a 3-oxoacyl-CoA + CoA. It functions in the pathway lipid metabolism; fatty acid beta-oxidation. Catalyzes the final step of fatty acid oxidation in which acetyl-CoA is released and the CoA ester of a fatty acid two carbons shorter is formed. The sequence is that of 3-ketoacyl-CoA thiolase from Escherichia coli (strain 55989 / EAEC).